The following is a 326-amino-acid chain: Fos-related antigen 2 (326 aa).

At methionine 1 the chain carries N-acetylmethionine. The disordered stretch occupies residues 1 to 39; that stretch reads MYQDYPGNFDTSSRGSSGSPAHAESYSSGGGGQQKFRVD. Residues 9-19 are compositionally biased toward polar residues; that stretch reads FDTSSRGSSGS. Lysine 35 is covalently cross-linked (Glycyl lysine isopeptide (Lys-Gly) (interchain with G-Cter in SUMO2)). Lysine 104 is modified (N6-acetyllysine; alternate). A Glycyl lysine isopeptide (Lys-Gly) (interchain with G-Cter in SUMO2); alternate cross-link involves residue lysine 104. Disordered regions lie at residues 111 to 131, 193 to 244, and 289 to 326; these read GRRR…RIRR, ISPE…QRSV, and EQES…LLAL. The residue at position 120 (serine 120) is a Phosphoserine. The bZIP domain occupies 124-187; the sequence is EEKRRIRRER…EKLEFMLVAH (64 aa). The interval 126 to 128 is basic motif; that stretch reads KRR. Positions 129–136 are leucine-zipper; the sequence is IRRERNKL. Serine 200 is modified (phosphoserine). Over residues 201–211 the composition is skewed to polar residues; that stretch reads PPTSGLQSLRG. Residue lysine 222 forms a Glycyl lysine isopeptide (Lys-Gly) (interchain with G-Cter in SUMO2); alternate linkage. Residue lysine 222 forms a Glycyl lysine isopeptide (Lys-Gly) (interchain with G-Cter in SUMO1); alternate linkage. Serine 230 is subject to Phosphoserine. A Glycyl lysine isopeptide (Lys-Gly) (interchain with G-Cter in SUMO2) cross-link involves residue lysine 239. Phosphoserine is present on residues serine 308 and serine 320. The segment covering 308–320 has biased composition (low complexity); sequence SSSGDQSSDSLNS.

This sequence belongs to the bZIP family. Fos subfamily. As to quaternary structure, heterodimer. Interacts with the BAF multiprotein chromatin-remodeling complex subunits SMARCB1 and SMARCD1. Interacts with ARID1A and JUN. Expressed in the brain cortex. Expressed at night in pineal gland (at protein level). Also expressed in osteoblasts (at protein level).

The protein resides in the nucleus. In terms of biological role, controls osteoclast survival and size. As a dimer with JUN, activates LIF transcription. Activates CEBPB transcription in PGE2-activated osteoblasts. This chain is Fos-related antigen 2 (Fosl2), found in Rattus norvegicus (Rat).